We begin with the raw amino-acid sequence, 334 residues long: Leucine-rich repeat-containing protein 39 (334 aa).

The stretch at 10–47 (AVNAVKEVWEKRIKKLNEDLKREKEFQQKLVRIWEERV) forms a coiled coil. 9 LRR repeats span residues 84 to 105 (QLQE…IGRF), 107 to 128 (NLIV…IGLL), 130 to 151 (RLQE…LSYC), 153 to 176 (SLEK…SNLL), 177 to 198 (KLTH…VLNM), 200 to 221 (ALEW…IERM), 223 to 244 (NLHT…ISSM), 246 to 267 (NLST…MEKM), and 269 to 290 (NLRF…PPSE).

As to quaternary structure, interacts with MYH7 (via C-terminus).

It is found in the cytoplasm. The protein resides in the myofibril. Its subcellular location is the sarcomere. It localises to the m line. Component of the sarcomeric M-band which plays a role in myocyte response to biomechanical stress. May regulate expression of other M-band proteins via an SRF-dependent pathway. Important for normal contractile function in heart. The polypeptide is Leucine-rich repeat-containing protein 39 (Bos taurus (Bovine)).